The sequence spans 219 residues: Deoxyribose-phosphate aldolase (219 aa).

Asp-88 acts as the Proton donor/acceptor in catalysis. Lys-150 (schiff-base intermediate with acetaldehyde) is an active-site residue. Lys-179 serves as the catalytic Proton donor/acceptor.

Belongs to the DeoC/FbaB aldolase family. DeoC type 1 subfamily.

Its subcellular location is the cytoplasm. The enzyme catalyses 2-deoxy-D-ribose 5-phosphate = D-glyceraldehyde 3-phosphate + acetaldehyde. The protein operates within carbohydrate degradation; 2-deoxy-D-ribose 1-phosphate degradation; D-glyceraldehyde 3-phosphate and acetaldehyde from 2-deoxy-alpha-D-ribose 1-phosphate: step 2/2. Catalyzes a reversible aldol reaction between acetaldehyde and D-glyceraldehyde 3-phosphate to generate 2-deoxy-D-ribose 5-phosphate. The polypeptide is Deoxyribose-phosphate aldolase (Aquifex aeolicus (strain VF5)).